The following is a 236-amino-acid chain: uncharacterized protein (236 aa).

The HTH gntR-type domain occupies 5 to 73 (QSTVENAKEK…DRKGWFVTQP (69 aa)). Residues 33 to 52 (ERELGELLGIKRMTLRQALL) constitute a DNA-binding region (H-T-H motif).

This is an uncharacterized protein from Escherichia coli O157:H7.